The primary structure comprises 369 residues: Endophilin-A (369 aa).

A BAR domain is found at 18-248 (TEKMGGAEGT…LQEKRAEAES (231 aa)). A coiled-coil region spans residues 227 to 249 (QCADVLRGLQETLQEKRAEAESR). Positions 275–294 (GTPSHISSSASPLPSPMRSP) are enriched in low complexity. Residues 275 to 297 (GTPSHISSSASPLPSPMRSPAKS) are disordered. An SH3 domain is found at 305–364 (QQQPCCQALYDFDPENPGELGFKENDIITLLNRVDDNWYEGAVNGRTGYFPQSYVQVQVP).

The protein belongs to the endophilin family.

The protein resides in the cytoplasm. It is found in the membrane. Functionally, required presynaptically at the neuromuscular junction. Implicated in synaptic vesicle endocytosis. This Drosophila virilis (Fruit fly) protein is Endophilin-A.